A 354-amino-acid chain; its full sequence is NAD-dependent protein deacetylase hst2-2 (354 aa).

Residues 16–279 (QCQNQTTLDS…REVARHLGWD (264 aa)) enclose the Deacetylase sirtuin-type domain. Residues 43–63 (GAGLSTSSGLADFRTPDTGLY) and 126–129 (QNID) contribute to the NAD(+) site. Histidine 146 acts as the Proton acceptor in catalysis. Zn(2+) contacts are provided by cysteine 154, cysteine 157, cysteine 178, and cysteine 183. NAD(+) contacts are provided by residues 220-222 (GTS), 245-247 (NRE), and cysteine 265.

Belongs to the sirtuin family. Class I subfamily. Zn(2+) is required as a cofactor.

The protein localises to the nucleus. It carries out the reaction N(6)-acetyl-L-lysyl-[protein] + NAD(+) + H2O = 2''-O-acetyl-ADP-D-ribose + nicotinamide + L-lysyl-[protein]. Its function is as follows. NAD-dependent histone deacetylase, which could function in telomeric silencing, cell cycle progression and chromosome stability. This chain is NAD-dependent protein deacetylase hst2-2, found in Emericella nidulans (strain FGSC A4 / ATCC 38163 / CBS 112.46 / NRRL 194 / M139) (Aspergillus nidulans).